Reading from the N-terminus, the 274-residue chain is Orotidine 5'-phosphate decarboxylase (274 aa).

Lys-95 serves as the catalytic Proton donor.

Belongs to the OMP decarboxylase family. Type 2 subfamily.

The enzyme catalyses orotidine 5'-phosphate + H(+) = UMP + CO2. It participates in pyrimidine metabolism; UMP biosynthesis via de novo pathway; UMP from orotate: step 2/2. This chain is Orotidine 5'-phosphate decarboxylase, found in Variovorax paradoxus (strain S110).